The following is a 204-amino-acid chain: MIAFLSGHLVAIEWGERSSLTVEVQGIGYRVKAPGRFLKQLPAVGEPVRVFTHLVVRETELVLYGFGSPAERDLFVELIKVSGVGPALGLALLNTFGLPELVQAVVTENVRLLSLTPGVGHKTAQRLALELKTKLAHWRQGMGVADQPLAGGPPMPIREEVEMALLALGYSTQEIQAALQALPTHPRPTEDWLRDAITYLSQQP.

A domain I region spans residues 1–67 (MIAFLSGHLV…ETELVLYGFG (67 aa)). The domain II stretch occupies residues 68–146 (SPAERDLFVE…HWRQGMGVAD (79 aa)). The segment at 147–157 (QPLAGGPPMPI) is flexible linker. The segment at 157 to 204 (IREEVEMALLALGYSTQEIQAALQALPTHPRPTEDWLRDAITYLSQQP) is domain III.

It belongs to the RuvA family. Homotetramer. Forms an RuvA(8)-RuvB(12)-Holliday junction (HJ) complex. HJ DNA is sandwiched between 2 RuvA tetramers; dsDNA enters through RuvA and exits via RuvB. An RuvB hexamer assembles on each DNA strand where it exits the tetramer. Each RuvB hexamer is contacted by two RuvA subunits (via domain III) on 2 adjacent RuvB subunits; this complex drives branch migration. In the full resolvosome a probable DNA-RuvA(4)-RuvB(12)-RuvC(2) complex forms which resolves the HJ.

It localises to the cytoplasm. In terms of biological role, the RuvA-RuvB-RuvC complex processes Holliday junction (HJ) DNA during genetic recombination and DNA repair, while the RuvA-RuvB complex plays an important role in the rescue of blocked DNA replication forks via replication fork reversal (RFR). RuvA specifically binds to HJ cruciform DNA, conferring on it an open structure. The RuvB hexamer acts as an ATP-dependent pump, pulling dsDNA into and through the RuvAB complex. HJ branch migration allows RuvC to scan DNA until it finds its consensus sequence, where it cleaves and resolves the cruciform DNA. The sequence is that of Holliday junction branch migration complex subunit RuvA from Synechococcus sp. (strain JA-2-3B'a(2-13)) (Cyanobacteria bacterium Yellowstone B-Prime).